Consider the following 330-residue polypeptide: MSFQTNYIHLADEILSGKTSISYEQALEILNSDENWWEIYAAALYLKNQVSRNNIRLNVLLSAKQGLCAENCGYCSQSKESTADIDKFGLLPQNVILKQAIVAHQNGASVFCIAMSGTKPSKREIEQLCQVIPEIKKSLPLEICLTAGFLDREQLHQLKQAGIDRINHNLNTPEENYPNIATTHSFKDRCDTLERIHNEDIDVCSGFICGMGESDEGLITLAFRLKELNPYSIPVNFLLAVEGTPLGKYNYLTPIKCLKIMAMLRFVFPFKELRLSAGREVHFENFESLVTLLVDSTFLGNYLTEGGRNQHTDIEFLEKLQLNHTKKELI.

Positions 53 to 276 constitute a Radical SAM core domain; sequence NNIRLNVLLS…VFPFKELRLS (224 aa). Residues C68, C72, and C75 each coordinate [4Fe-4S] cluster. [2Fe-2S] cluster-binding residues include C112, C144, C204, and R274.

It belongs to the radical SAM superfamily. Biotin synthase family. In terms of assembly, homodimer. [4Fe-4S] cluster serves as cofactor. [2Fe-2S] cluster is required as a cofactor.

The enzyme catalyses (4R,5S)-dethiobiotin + (sulfur carrier)-SH + 2 reduced [2Fe-2S]-[ferredoxin] + 2 S-adenosyl-L-methionine = (sulfur carrier)-H + biotin + 2 5'-deoxyadenosine + 2 L-methionine + 2 oxidized [2Fe-2S]-[ferredoxin]. It participates in cofactor biosynthesis; biotin biosynthesis; biotin from 7,8-diaminononanoate: step 2/2. In terms of biological role, catalyzes the conversion of dethiobiotin (DTB) to biotin by the insertion of a sulfur atom into dethiobiotin via a radical-based mechanism. The protein is Biotin synthase of Streptococcus agalactiae serotype III (strain NEM316).